The chain runs to 573 residues: Peptidyl-prolyl cis-trans isomerase-like 2 (573 aa).

Positions 37 to 119 (QRLPFDCCAL…GNLHDPITYK (83 aa)) constitute a U-box domain. The tract at residues 223-247 (KNKSGQSPAPTPSKIDDGKGQEKKE) is disordered. Basic and acidic residues predominate over residues 236–247 (KIDDGKGQEKKE). Residues 312–469 (SKAYATITTN…RDIVIQGVTV (158 aa)) form the PPIase cyclophilin-type domain. Residues 489–510 (DQSDAALKRRAEAQKEREKDRT) show a composition bias toward basic and acidic residues. The tract at residues 489 to 515 (DQSDAALKRRAEAQKEREKDRTTWLGT) is disordered.

Belongs to the cyclophilin-type PPIase family. PPIL2 subfamily.

It localises to the nucleus. It carries out the reaction [protein]-peptidylproline (omega=180) = [protein]-peptidylproline (omega=0). It catalyses the reaction S-ubiquitinyl-[E2 ubiquitin-conjugating enzyme]-L-cysteine + [acceptor protein]-L-lysine = [E2 ubiquitin-conjugating enzyme]-L-cysteine + N(6)-ubiquitinyl-[acceptor protein]-L-lysine.. The protein operates within protein modification; protein ubiquitination. Functionally, may catalyze the cis-trans isomerization of proline imidic peptide bonds in oligopeptides thereby assisting the folding of proteins. May also function as a chaperone, playing a role in intracellular transport of proteins. May also have a protein ubiquitin ligase activity acting as an E3 ubiquitin protein ligase or as a ubiquitin-ubiquitin ligase promoting elongation of ubiquitin chains on proteins. In Cryptococcus neoformans var. neoformans serotype D (strain B-3501A) (Filobasidiella neoformans), this protein is Peptidyl-prolyl cis-trans isomerase-like 2 (CYP8).